We begin with the raw amino-acid sequence, 279 residues long: 3-methyl-2-oxobutanoate hydroxymethyltransferase (279 aa).

Mg(2+)-binding residues include Asp-44 and Asp-83. 3-methyl-2-oxobutanoate is bound by residues 44-45, Asp-83, and Lys-113; that span reads DS. Glu-115 is a Mg(2+) binding site. Glu-182 (proton acceptor) is an active-site residue.

It belongs to the PanB family. As to quaternary structure, homodecamer; pentamer of dimers. The cofactor is Mg(2+).

Its subcellular location is the cytoplasm. The catalysed reaction is 3-methyl-2-oxobutanoate + (6R)-5,10-methylene-5,6,7,8-tetrahydrofolate + H2O = 2-dehydropantoate + (6S)-5,6,7,8-tetrahydrofolate. It participates in cofactor biosynthesis; (R)-pantothenate biosynthesis; (R)-pantoate from 3-methyl-2-oxobutanoate: step 1/2. In terms of biological role, catalyzes the reversible reaction in which hydroxymethyl group from 5,10-methylenetetrahydrofolate is transferred onto alpha-ketoisovalerate to form ketopantoate. This is 3-methyl-2-oxobutanoate hydroxymethyltransferase from Dehalococcoides mccartyi (strain CBDB1).